A 244-amino-acid polypeptide reads, in one-letter code: Venom nerve growth factor 1 (244 aa).

An N-terminal signal peptide occupies residues 1 to 18 (MSMLCYTLIIAFLIGIWA). The propeptide occupies 19-125 (APKSEDNVPL…TLNRNIRAKR (107 aa)). Residues 47 to 66 (GLKTSRNTDQRHPAPKKAED) are compositionally biased toward basic and acidic residues. The tract at residues 47–67 (GLKTSRNTDQRHPAPKKAEDQ) is disordered. 3 cysteine pairs are disulfide-bonded: C139-C205, C181-C233, and C193-C235.

Belongs to the NGF-beta family. As to quaternary structure, homodimer; non-covalently linked. In terms of tissue distribution, expressed by the venom gland.

The protein localises to the secreted. Nerve growth factor is important for the development and maintenance of the sympathetic and sensory nervous systems. It stimulates division and differentiation of sympathetic and embryonic sensory neurons as well as basal forebrain cholinergic neurons in the brain. Its relevance in the snake venom is not clear. However, it has been shown to inhibit metalloproteinase-dependent proteolysis of platelet glycoprotein Ib alpha, suggesting a metalloproteinase inhibition to prevent metalloprotease autodigestion and/or protection against prey proteases. Binds a lipid between the two protein chains in the homodimer. The lipid-bound form promotes histamine relase from mouse mast cells, contrary to the lipid-free form. The chain is Venom nerve growth factor 1 from Notechis scutatus scutatus (Mainland tiger snake).